Here is a 367-residue protein sequence, read N- to C-terminus: Germination protease (367 aa).

Positions 1-15 (MKEPLDLSKYSVRTD) are excised as a propeptide.

It belongs to the peptidase A25 family. As to quaternary structure, homotetramer. In terms of processing, autoproteolytically processed. The inactive tetrameric zymogen termed p46 autoprocesses to a smaller form termed p41, which is active only during spore germination.

It catalyses the reaction Endopeptidase action with P4 Glu or Asp, P1 preferably Glu &gt; Asp, P1' hydrophobic and P2' Ala.. Functionally, initiates the rapid degradation of small, acid-soluble proteins during spore germination. The chain is Germination protease from Bacillus cereus (strain ATCC 10987 / NRS 248).